We begin with the raw amino-acid sequence, 344 residues long: L-rhamnose-proton symporter (344 aa).

A run of 10 helical transmembrane segments spans residues 4–24 (AITM…CFYA), 38–58 (WSVG…ALLL), 68–88 (FSLS…IGNI), 101–121 (MGIG…TPII), 137–157 (TLLG…AGQL), 175–195 (LVLA…MNAA), 214–234 (LPSY…FCFI), 259–279 (VLLS…YAWG), 290–310 (ISWM…GLVL), and 323–343 (VLSL…IGMA).

Belongs to the L-rhamnose transporter (TC 2.A.7.6) family.

The protein localises to the cell inner membrane. The enzyme catalyses L-rhamnopyranose(in) + H(+)(in) = L-rhamnopyranose(out) + H(+)(out). Its function is as follows. Uptake of L-rhamnose across the cytoplasmic membrane with the concomitant transport of protons into the cell (symport system). This is L-rhamnose-proton symporter from Shigella boydii serotype 18 (strain CDC 3083-94 / BS512).